The chain runs to 264 residues: Thymidylate synthase (264 aa).

DUMP contacts are provided by residues arginine 21 and 126–127; that span reads RR. Residue cysteine 146 is the Nucleophile of the active site. DUMP-binding positions include 166-169, asparagine 177, and 207-209; these read RSAD and HLY. Aspartate 169 lines the (6R)-5,10-methylene-5,6,7,8-tetrahydrofolate pocket. (6R)-5,10-methylene-5,6,7,8-tetrahydrofolate is bound at residue alanine 263.

The protein belongs to the thymidylate synthase family. Bacterial-type ThyA subfamily. In terms of assembly, homodimer.

The protein resides in the cytoplasm. It catalyses the reaction dUMP + (6R)-5,10-methylene-5,6,7,8-tetrahydrofolate = 7,8-dihydrofolate + dTMP. It participates in pyrimidine metabolism; dTTP biosynthesis. Catalyzes the reductive methylation of 2'-deoxyuridine-5'-monophosphate (dUMP) to 2'-deoxythymidine-5'-monophosphate (dTMP) while utilizing 5,10-methylenetetrahydrofolate (mTHF) as the methyl donor and reductant in the reaction, yielding dihydrofolate (DHF) as a by-product. This enzymatic reaction provides an intracellular de novo source of dTMP, an essential precursor for DNA biosynthesis. This is Thymidylate synthase from Rhodopseudomonas palustris (strain BisB5).